The sequence spans 209 residues: PRA1 family protein A2 (209 aa).

The next 4 helical transmembrane spans lie at 51–72 (LYYY…ALVT), 76–98 (ALVG…AASF), 142–162 (RWVF…SSCG), and 163–183 (LLWV…HASI).

The protein belongs to the PRA1 family.

It is found in the endosome membrane. In terms of biological role, may be involved in both secretory and endocytic intracellular trafficking in the endosomal/prevacuolar compartments. This is PRA1 family protein A2 (PRA1A2) from Arabidopsis thaliana (Mouse-ear cress).